The primary structure comprises 200 residues: Casparian strip membrane protein 1 (200 aa).

Residues 1–38 lie on the Cytoplasmic side of the membrane; that stretch reads MKSGDHAAIDVPESSAVAKGKAPLIATPREQKSGFKKG. A helical transmembrane segment spans residues 39-59; the sequence is LGIFDFLLRLGAIIAALAAAA. Residues 60–86 lie on the Extracellular side of the membrane; that stretch reads TMGTSDETLPFFTQFFQFEASYDDLPT. The chain crosses the membrane as a helical span at residues 87-107; it reads FMFFVIAMALIGGYLVLSLPF. Over 108 to 121 the chain is Cytoplasmic; sequence SIVTIVRPHAVAPR. The helical transmembrane segment at 122–142 threads the bilayer; sequence LLLFILDIVALTLTTAAGAAA. At 143–171 the chain is on the extracellular side; sequence AAIVYLAHNGNPNTNWLAICQQFGDFCQE. Residues 172 to 192 traverse the membrane as a helical segment; the sequence is VSGAVVASFVTVVVLMSLVLL. Residues 193-200 lie on the Cytoplasmic side of the membrane; the sequence is SGVALKKH.

The protein belongs to the Casparian strip membrane proteins (CASP) family. Homodimer and heterodimers.

It localises to the cell membrane. In terms of biological role, regulates membrane-cell wall junctions and localized cell wall deposition. Required for establishment of the Casparian strip membrane domain (CSD) and the subsequent formation of Casparian strips, a cell wall modification of the root endodermis that determines an apoplastic barrier between the intraorganismal apoplasm and the extraorganismal apoplasm and prevents lateral diffusion. The sequence is that of Casparian strip membrane protein 1 from Theobroma cacao (Cacao).